Here is a 530-residue protein sequence, read N- to C-terminus: MADDIDIEAMLEAPYKKDENKLSSANGHEERSKKRKKSKSRSRSHERKRSKSKERKRSRDRERKKSKSRERKRSRSKERRRSRSRSRDRRFRGRYRSPYSGPKFNSAIRGKIGLPHSIKLSRRRSRSKSPFRKDKSPVREPIDNLTPEERDARTVFCMQLAARIRPRDLEEFFSTVGKVRDVRMISDRNSRRSKGIAYVEFVDVSSVPLAIGLTGQRVLGVPIIVQASQAEKNRAAAMANNLQKGSAGPMRLYVGSLHFNITEDMLRGIFEPFGRIESIQLMMDSETGRSKGYGFITFSDSECAKKALEQLNGFELAGRPMKVGHVTERTDASSASSFLDSDELERTGIDLGTTGRLQLMARLAEGTGLQIPPAAQQALQMSGSLAFGAVAEFSFVIDLQTRLSQQTEASALAAAASVQPLATQCFQLSNMFNPQTEEEVGWDTEIKDDVIEECNKHGGVIHIYVDKNSAQGNVYVKCPSIAAAIAAVNALHGRWFAGKMITAAYVPLPTYHNLFPDSMTATQLLVPSRR.

Positions 1–146 (MADDIDIEAM…PVREPIDNLT (146 aa)) are disordered. N-acetylalanine is present on alanine 2. Residues 14–32 (PYKKDENKLSSANGHEERS) show a composition bias toward basic and acidic residues. 2 stretches are compositionally biased toward basic residues: residues 33–56 (KKRKKSKSRSRSHERKRSKSKERK) and 64–95 (KKSKSRERKRSRSKERRRSRSRSRDRRFRGRY). At tyrosine 95 the chain carries Phosphotyrosine. Phosphoserine occurs at positions 97 and 100. Lysine 111 participates in a covalent cross-link: Glycyl lysine isopeptide (Lys-Gly) (interchain with G-Cter in SUMO2). A Phosphoserine modification is found at serine 117. Lysine 119 is covalently cross-linked (Glycyl lysine isopeptide (Lys-Gly) (interchain with G-Cter in SUMO2)). Residues 119 to 130 (KLSRRRSRSKSP) show a composition bias toward basic residues. A phosphoserine mark is found at serine 121 and serine 136. Over residues 131–146 (FRKDKSPVREPIDNLT) the composition is skewed to basic and acidic residues. Position 146 is a phosphothreonine (threonine 146). The RRM 1 domain maps to 153 to 230 (RTVFCMQLAA…VPIIVQASQA (78 aa)). Lysine 244 is covalently cross-linked (Glycyl lysine isopeptide (Lys-Gly) (interchain with G-Cter in SUMO2)). Residues 250–328 (MRLYVGSLHF…RPMKVGHVTE (79 aa)) enclose the RRM 2 domain. The segment at 291–355 (KGYGFITFSD…RTGIDLGTTG (65 aa)) is activating domain. Residues 291–406 (KGYGFITFSD…IDLQTRLSQQ (116 aa)) form an interaction with JUN region. Phosphoserine occurs at positions 334, 337, and 341. The interaction with ESR1 and ESR2 stretch occupies residues 355–406 (GRLQLMARLAEGTGLQIPPAAQQALQMSGSLAFGAVAEFSFVIDLQTRLSQQ). The segment at 406–530 (QTEASALAAA…ATQLLVPSRR (125 aa)) is interaction with NCOA6. Positions 445–508 (EIKDDVIEEC…KMITAAYVPL (64 aa)) constitute an RRM 3 domain.

The protein belongs to the splicing factor SR family. As to quaternary structure, interacts with NCOA6 and JUN. Interacts with ESR1 and ESR2, in the presence of estradiol (E2). Interacts with RSRC1 (via Arg/Ser-rich domain). Interacts with SF3B1. Interacts with ZNF106 (via N-terminus). Post-translationally, aryl sulfonamide anticancer drugs, such as indisulam (E7070) or E7820, promote ubiquitination and subsequent degradation by the DCX(DCAF15) complex. RBM39 degradation results in splicing defects and death in cancer cell lines. Aryl sulfonamide anticancer drugs change the substrate specificity of DCAF15 by acting as a molecular glue that promotes binding between DCAF15 and weak affinity interactor RBM39. In terms of tissue distribution, widely expressed. Highly expressed in pancreas, skeletal muscle, lung and brain. Expressed at intermediate level in kidney, liver and heart.

It localises to the nucleus speckle. Its function is as follows. RNA-binding protein that acts as a pre-mRNA splicing factor. Acts by promoting exon inclusion via regulation of exon cassette splicing. Also acts as a transcriptional coactivator for steroid nuclear receptors ESR1/ER-alpha and ESR2/ER-beta, and JUN/AP-1, independently of the pre-mRNA splicing factor activity. The polypeptide is RNA-binding protein 39 (Homo sapiens (Human)).